Here is a 245-residue protein sequence, read N- to C-terminus: 1-(5-phosphoribosyl)-5-[(5-phosphoribosylamino)methylideneamino] imidazole-4-carboxamide isomerase (245 aa).

Residue Asp7 is the Proton acceptor of the active site. Catalysis depends on Asp129, which acts as the Proton donor.

The protein belongs to the HisA/HisF family.

It is found in the cytoplasm. The enzyme catalyses 1-(5-phospho-beta-D-ribosyl)-5-[(5-phospho-beta-D-ribosylamino)methylideneamino]imidazole-4-carboxamide = 5-[(5-phospho-1-deoxy-D-ribulos-1-ylimino)methylamino]-1-(5-phospho-beta-D-ribosyl)imidazole-4-carboxamide. Its pathway is amino-acid biosynthesis; L-histidine biosynthesis; L-histidine from 5-phospho-alpha-D-ribose 1-diphosphate: step 4/9. The chain is 1-(5-phosphoribosyl)-5-[(5-phosphoribosylamino)methylideneamino] imidazole-4-carboxamide isomerase from Salmonella arizonae (strain ATCC BAA-731 / CDC346-86 / RSK2980).